We begin with the raw amino-acid sequence, 276 residues long: Small ribosomal subunit protein uS2 (276 aa).

The tract at residues 255 to 276 is disordered; sequence ASATATAAPTEAGAPEPTTDPS.

The protein belongs to the universal ribosomal protein uS2 family.

In Mycolicibacterium paratuberculosis (strain ATCC BAA-968 / K-10) (Mycobacterium paratuberculosis), this protein is Small ribosomal subunit protein uS2.